Reading from the N-terminus, the 324-residue chain is Granaticin polyketide synthase bifunctional cyclase/dehydratase (324 aa).

The segment at Met-1–His-21 is disordered.

Its pathway is antibiotic biosynthesis; granaticin biosynthesis. In terms of biological role, is needed for correct cyclization of the oligoketide leading to isochromanequinone formation. The chain is Granaticin polyketide synthase bifunctional cyclase/dehydratase (gra-orf4) from Streptomyces violaceoruber.